A 1342-amino-acid chain; its full sequence is DNA-directed RNA polymerase subunit beta (1342 aa).

Belongs to the RNA polymerase beta chain family. The RNAP catalytic core consists of 2 alpha, 1 beta, 1 beta' and 1 omega subunit. When a sigma factor is associated with the core the holoenzyme is formed, which can initiate transcription.

It carries out the reaction RNA(n) + a ribonucleoside 5'-triphosphate = RNA(n+1) + diphosphate. In terms of biological role, DNA-dependent RNA polymerase catalyzes the transcription of DNA into RNA using the four ribonucleoside triphosphates as substrates. The sequence is that of DNA-directed RNA polymerase subunit beta from Erwinia tasmaniensis (strain DSM 17950 / CFBP 7177 / CIP 109463 / NCPPB 4357 / Et1/99).